An 87-amino-acid chain; its full sequence is Kawaguchipeptin peptide (87 aa).

Positions 1-33 are excised as a propeptide; sequence MKNPTLLPKLTAPVERPAVTSSDLKQASSVDAA. Tryptophan 34 is lipidated: 3'-prenyl-2',N2-cyclotryptophan; partial. Residues 34 to 44 constitute a cross-link (cyclopeptide (Trp-Pro)); sequence WLNGDNNWSTP. Position 35 is a D-leucine; partial (leucine 35). Residue tryptophan 41 is the site of 3'-prenyl-2',N2-cyclotryptophan; partial attachment. A propeptide spanning residues 45–51 is cleaved from the precursor; sequence FAGVNAA. Tryptophan 52 carries 3'-prenyl-2',N2-cyclotryptophan; partial lipidation. Residues 52 to 62 constitute a cross-link (cyclopeptide (Trp-Pro)); the sequence is WLNGDNNWSTP. D-leucine; partial is present on leucine 53. Tryptophan 59 carries the 3'-prenyl-2',N2-cyclotryptophan; partial lipid modification. Residues 63-69 constitute a propeptide that is removed on maturation; the sequence is FAGVNAA. Tryptophan 70 carries 3'-prenyl-2',N2-cyclotryptophan; partial lipidation. The segment at residues 70 to 80 is a cross-link (cyclopeptide (Trp-Pro)); it reads WLNGDNNWSTP. Leucine 71 carries the post-translational modification D-leucine; partial. Tryptophan 77 carries 3'-prenyl-2',N2-cyclotryptophan; partial lipidation. Residues 81–87 constitute a propeptide that is removed on maturation; sequence FAADGAE.

Post-translationally, kawaguchipeptin A contains a D-Leu and 2 prenylated Trp, whereas kawaguchipeptin B only contains unmodified amino acids. Kawaguchipeptin A is prenylated in vivo. Upon expression in E.coli of the whole operon, Trp residues are prenylated by C-prenyltransferase KgpF. Prenylation by KgpF is likely the last enzymatic step in the biosynthetic maturation of kawaguchipeptin A.

Its function is as follows. Both kawaguchipeptin A and B, which only differ by post-translational modifications, have antibacterial activities, since they inhibit the growth of the Gram-positive bacterium S.aureus at a concentration of 1 ug/mL. The polypeptide is Kawaguchipeptin peptide (Microcystis aeruginosa (strain NIES-88 / KW-MA1-3)).